Reading from the N-terminus, the 204-residue chain is Superoxide dismutase [Mn] (204 aa).

Histidine 29, histidine 84, aspartate 167, and histidine 171 together coordinate Mn(2+).

Belongs to the iron/manganese superoxide dismutase family. Homotetramer. Mn(2+) serves as cofactor.

It catalyses the reaction 2 superoxide + 2 H(+) = H2O2 + O2. Destroys superoxide anion radicals which are normally produced within the cells and which are toxic to biological systems. The protein is Superoxide dismutase [Mn] (sodA) of Thermus thermophilus (strain ATCC BAA-163 / DSM 7039 / HB27).